The following is a 397-amino-acid chain: Riboflavin biosynthesis protein RibBA (397 aa).

The segment at 1–199 (MFHRIEEALE…IEDLIAYRRH (199 aa)) is DHBP synthase. D-ribulose 5-phosphate is bound by residues 26–27 (RE), D31, 138–142 (RAGHT), and E162. A Mg(2+)-binding site is contributed by E27. Residue H141 coordinates Mg(2+). The segment at 200–397 (HETLVTREVE…VNKLGHLLNL (198 aa)) is GTP cyclohydrolase II. GTP is bound at residue 250–254 (RVHSE). Zn(2+) is bound by residues C255, C266, and C268. GTP is bound by residues Q271, 293–295 (EGR), and T315. The Proton acceptor; for GTP cyclohydrolase activity role is filled by D327. R329 (nucleophile; for GTP cyclohydrolase activity) is an active-site residue. GTP-binding residues include T350 and K355.

In the N-terminal section; belongs to the DHBP synthase family. It in the C-terminal section; belongs to the GTP cyclohydrolase II family. Mg(2+) serves as cofactor. Requires Mn(2+) as cofactor. The cofactor is Zn(2+).

The enzyme catalyses D-ribulose 5-phosphate = (2S)-2-hydroxy-3-oxobutyl phosphate + formate + H(+). It catalyses the reaction GTP + 4 H2O = 2,5-diamino-6-hydroxy-4-(5-phosphoribosylamino)-pyrimidine + formate + 2 phosphate + 3 H(+). It participates in cofactor biosynthesis; riboflavin biosynthesis; 2-hydroxy-3-oxobutyl phosphate from D-ribulose 5-phosphate: step 1/1. The protein operates within cofactor biosynthesis; riboflavin biosynthesis; 5-amino-6-(D-ribitylamino)uracil from GTP: step 1/4. In terms of biological role, catalyzes the conversion of D-ribulose 5-phosphate to formate and 3,4-dihydroxy-2-butanone 4-phosphate. Catalyzes the conversion of GTP to 2,5-diamino-6-ribosylamino-4(3H)-pyrimidinone 5'-phosphate (DARP), formate and pyrophosphate. The protein is Riboflavin biosynthesis protein RibBA of Bacillus cereus (strain B4264).